We begin with the raw amino-acid sequence, 449 residues long: Mycosin-1 (449 aa).

The signal sequence occupies residues Met-1–Ala-23. Cys-51 and Cys-120 are oxidised to a cystine. The 324-residue stretch at Pro-66–Leu-389 folds into the Peptidase S8 domain. Catalysis depends on charge relay system residues Asp-92 and His-123. Disordered stretches follow at residues Phe-160–Gly-179 and Thr-240–Arg-259. Residues Asn-170–Gly-179 are compositionally biased toward polar residues. Cys-206 and Cys-244 are joined by a disulfide. Ser-334 serves as the catalytic Charge relay system. The chain crosses the membrane as a helical span at residues Ile-421 to Ala-441.

It belongs to the peptidase S8 family.

The protein resides in the cell membrane. Functionally, may play a dual role in regulation of ESX-1 secretion and virulence. Acts as a protease that cleaves EspB. This chain is Mycosin-1, found in Mycolicibacterium smegmatis (strain ATCC 700084 / mc(2)155) (Mycobacterium smegmatis).